A 200-amino-acid polypeptide reads, in one-letter code: Snake venom metalloproteinase hemorrhagic factor 2 (200 aa).

The 197-residue stretch at 4-200 folds into the Peptidase M12B domain; sequence KYIELVVVAD…RKPQCILNKP (197 aa). Glu-7 contacts Ca(2+). Asn-70 carries N-linked (GlcNAc...) asparagine glycosylation. Residue Asp-91 participates in Ca(2+) binding. Cystine bridges form between Cys-115–Cys-195, Cys-155–Cys-179, and Cys-157–Cys-162. Residue His-140 participates in Zn(2+) binding. Glu-141 is an active-site residue. Positions 144 and 150 each coordinate Zn(2+). Positions 195 and 198 each coordinate Ca(2+).

This sequence belongs to the venom metalloproteinase (M12B) family. P-I subfamily. Monomer. Zn(2+) is required as a cofactor. In terms of tissue distribution, expressed by the venom gland.

Its subcellular location is the secreted. Snake venom zinc metalloproteinase that induces weak hemorrhage and mild myonecrosis. Shows mild myotoxicity by killing myocytes. Also induces edema in the mouse footpad at doses where hemorrhage is absent. In vitro, degrades laminin, fibronectin, and type IV collagen, suggesting this toxin play a role in local tissue damage by degrading extracellular matrix, and possibly by degrading muscle extracellular matrix. Hemorrhage is not due to cytotoxicity towards endothelial cells in culture, and may only play a minor role in local bleeding characteristic of L.muta envenomations. Also induces the synthesis of several endogenous matrix metalloproteinases, which in turn, may participate in extracellular matrix degradation. The sequence is that of Snake venom metalloproteinase hemorrhagic factor 2 from Lachesis muta muta (Bushmaster).